The chain runs to 287 residues: Seed leukoagglutinin (287 aa).

A signal peptide spans 1–29 (MATSNSKPTQVLLATFLTFFFLLLNNVNS). N-acetyl-alpha-neuraminyl-(2-&gt;3)-beta-D-galactosyl-(1-&gt;4)-beta-D-glucose is bound at residue Y74. N-linked (GlcNAc...) (paucimannose) asparagine glycosylation is present at N90. Positions 116, 133, and 136 each coordinate N-acetyl-alpha-neuraminyl-(2-&gt;3)-beta-D-galactosyl-(1-&gt;4)-beta-D-glucose. N-linked (GlcNAc...) (paucimannose) asparagine glycosylation is present at N142. E156 and D158 together coordinate Mn(2+). Ca(2+) contacts are provided by D158, Y160, D166, and D169. The N-acetyl-alpha-neuraminyl-(2-&gt;3)-beta-D-galactosyl-(1-&gt;4)-beta-D-glucose site is built by Y160 and D166. Mn(2+) is bound by residues D169 and H174. N208 carries N-linked (GlcNAc...) (high mannose) asparagine; partial glycosylation. Residue N220 is glycosylated (N-linked (GlcNAc...) (paucimannose) asparagine; partial). Residue E253 participates in N-acetyl-alpha-neuraminyl-(2-&gt;3)-beta-D-galactosyl-(1-&gt;4)-beta-D-glucose binding. Positions 279–287 (NVHIARYTA) are cleaved as a propeptide — removed in mature form.

Belongs to the leguminous lectin family. In terms of assembly, homodimer; disulfide-linked. Dimer of homodimers. The glycosylation on N-90 is determined to by of the high mannose type in PubMed:26003537, while PubMed:27720757 found a paucimannose at this position. Post-translationally, processed at its C-terminus.

In terms of biological role, sialic acid-binding lectin recognizing oligosaccharides containing terminal sialic acid linked via alpha-2,3 bond to penultimate galactose residues. Binds the trisaccharide sequence Neu5Ac-alpha-2,3-Gal-beta-1,4-GlcNAc. Binds fetuin when fully glycosylated but not when the high mannose-type glycans are removed, although the secondary structure is virtually unaffected by deglycosylation of the high mannose-type glycans. The lectin activity may depend on the presence of a single GlcNAc attached to N-90. The polypeptide is Seed leukoagglutinin (Maackia amurensis (Amur maackia)).